Here is a 628-residue protein sequence, read N- to C-terminus: Probable potassium transport system protein Kup (628 aa).

The next 12 membrane-spanning stretches (helical) occupy residues 12-32 (ALPLAAEIGALGVVFGDIGTS), 57-77 (LLSLITWSIILSVTVKYVMLV), 106-126 (WYLLAAGLVGAAMLIGDGVLT), 141-161 (ISPALLDWIVPLTVLVLAAVF), 174-194 (FYGPIMVLWFGSLAVLGVYGI), 219-239 (LAGVIIGACFLAITGGEALYA), 253-273 (WLFVAMPALLLNYFGQGAILL), 295-315 (LLFLATAATVIASQSIITGVF), 343-363 (IYVGRLNWLLMVACIAVVLGF), 369-389 (LASAYGIAVAFAMVTTSILFV), 402-422 (AVIALGIGLFSLDAAFASANL), and 425-445 (LHEGGWLPLTIAGIVIFVMVS).

Belongs to the HAK/KUP transporter (TC 2.A.72) family.

It localises to the cell inner membrane. It catalyses the reaction K(+)(in) + H(+)(in) = K(+)(out) + H(+)(out). Transport of potassium into the cell. Likely operates as a K(+):H(+) symporter. The sequence is that of Probable potassium transport system protein Kup from Azorhizobium caulinodans (strain ATCC 43989 / DSM 5975 / JCM 20966 / LMG 6465 / NBRC 14845 / NCIMB 13405 / ORS 571).